Consider the following 771-residue polypeptide: Solute carrier family 7 member 14 (771 aa).

Helical transmembrane passes span 58–78 (LISL…SGLV), 83–103 (AGPG…LSGV), 119–141 (AYTY…NLIL), 187–207 (YPDL…ALGV), 216–236 (VLNV…LFFI), and 251–271 (WSGV…FDII). Asn-282 carries an N-linked (GlcNAc...) asparagine glycan. The next 4 membrane-spanning stretches (helical) occupy residues 291-311 (ASLV…TLMV), 336-356 (FVVA…SLFP), 384-404 (PVVA…LVSL), and 407-427 (LIEM…VCVL). Phosphoserine occurs at positions 465, 468, 475, and 488. Transmembrane regions (helical) follow at residues 565-585 (VTIC…FIIF), 596-616 (WAIL…FVIL), 628-648 (MAPC…YLML), and 655-675 (WIRF…YGIW). Asn-676 is a glycosylation site (N-linked (GlcNAc...) asparagine). The segment at 735–771 (SDAKANSRTSSKAKSKSKHKQNSEALIANDELDCSPE) is disordered. The span at 745–754 (SKAKSKSKHK) shows a compositional bias: basic residues. Phosphoserine occurs at positions 757 and 769.

This sequence belongs to the amino acid-polyamine-organocation (APC) superfamily. Expressed in retina, brain and spinal cord. In the retina, expressed in the inner nuclear layer and photoreceptor layer (at protein level). Expressed in liver, spleen, lung, kidney intestine and brain (at protein level).

The protein resides in the lysosome membrane. It catalyses the reaction 4-aminobutanoate(in) = 4-aminobutanoate(out). Imports 4-aminobutanoate (GABA) into lysosomes. May act as a GABA sensor that regulates mTORC2-dependent INS signaling and gluconeogenesis. The transport mechanism and substrate selectivity remain to be elucidated. This Mus musculus (Mouse) protein is Solute carrier family 7 member 14.